The following is a 228-amino-acid chain: UPF0502 protein AZOSEA09860 (228 aa).

The protein belongs to the UPF0502 family.

This is UPF0502 protein AZOSEA09860 from Aromatoleum aromaticum (strain DSM 19018 / LMG 30748 / EbN1) (Azoarcus sp. (strain EbN1)).